Reading from the N-terminus, the 172-residue chain is Transcription factor E (172 aa).

One can recognise an HTH TFE/IIEalpha-type domain in the interval 8-90; it reads DDPVVQKYLH…LWTFQYENVP (83 aa).

This sequence belongs to the TFE family. In terms of assembly, monomer. Interaction with RNA polymerase subunits RpoF and RpoE is necessary for Tfe stimulatory transcription activity. Able to interact with Tbp and RNA polymerase in the absence of DNA promoter. Interacts both with the preinitiation and elongation complexes.

Functionally, transcription factor that plays a role in the activation of archaeal genes transcribed by RNA polymerase. Facilitates transcription initiation by enhancing TATA-box recognition by TATA-box-binding protein (Tbp), and transcription factor B (Tfb) and RNA polymerase recruitment. Not absolutely required for transcription in vitro, but particularly important in cases where Tbp or Tfb function is not optimal. It dynamically alters the nucleic acid-binding properties of RNA polymerases by stabilizing the initiation complex and destabilizing elongation complexes. Seems to translocate with the RNA polymerase following initiation and acts by binding to the non template strand of the transcription bubble in elongation complexes. The chain is Transcription factor E from Halobacterium salinarum (strain ATCC 700922 / JCM 11081 / NRC-1) (Halobacterium halobium).